A 309-amino-acid polypeptide reads, in one-letter code: Probable manganese-dependent inorganic pyrophosphatase (309 aa).

6 residues coordinate Mn(2+): H9, D13, D15, D75, H97, and D149.

It belongs to the PPase class C family. Requires Mn(2+) as cofactor.

The protein localises to the cytoplasm. It catalyses the reaction diphosphate + H2O = 2 phosphate + H(+). This Staphylococcus aureus (strain COL) protein is Probable manganese-dependent inorganic pyrophosphatase.